Here is a 539-residue protein sequence, read N- to C-terminus: Glutamyl-tRNA(Gln) amidotransferase subunit B, mitochondrial (539 aa).

The protein belongs to the GatB/GatE family. GatB subfamily. As to quaternary structure, subunit of the heterotrimeric GatFAB amidotransferase (AdT) complex, composed of A, B and F subunits.

It localises to the mitochondrion. It catalyses the reaction L-glutamyl-tRNA(Gln) + L-glutamine + ATP + H2O = L-glutaminyl-tRNA(Gln) + L-glutamate + ADP + phosphate + H(+). In terms of biological role, allows the formation of correctly charged Gln-tRNA(Gln) through the transamidation of misacylated Glu-tRNA(Gln) in the mitochondria. The reaction takes place in the presence of glutamine and ATP through an activated gamma-phospho-Glu-tRNA(Gln). The protein is Glutamyl-tRNA(Gln) amidotransferase subunit B, mitochondrial of Kluyveromyces lactis (strain ATCC 8585 / CBS 2359 / DSM 70799 / NBRC 1267 / NRRL Y-1140 / WM37) (Yeast).